Reading from the N-terminus, the 258-residue chain is Ubiquinone/menaquinone biosynthesis C-methyltransferase UbiE (258 aa).

Residues Met1–Glu20 form a disordered region. Residues Thr81, Asp102, and Asn130–Ala131 contribute to the S-adenosyl-L-methionine site.

It belongs to the class I-like SAM-binding methyltransferase superfamily. MenG/UbiE family.

It catalyses the reaction a 2-demethylmenaquinol + S-adenosyl-L-methionine = a menaquinol + S-adenosyl-L-homocysteine + H(+). The catalysed reaction is a 2-methoxy-6-(all-trans-polyprenyl)benzene-1,4-diol + S-adenosyl-L-methionine = a 5-methoxy-2-methyl-3-(all-trans-polyprenyl)benzene-1,4-diol + S-adenosyl-L-homocysteine + H(+). It functions in the pathway quinol/quinone metabolism; menaquinone biosynthesis; menaquinol from 1,4-dihydroxy-2-naphthoate: step 2/2. The protein operates within cofactor biosynthesis; ubiquinone biosynthesis. Functionally, methyltransferase required for the conversion of demethylmenaquinol (DMKH2) to menaquinol (MKH2) and the conversion of 2-polyprenyl-6-methoxy-1,4-benzoquinol (DDMQH2) to 2-polyprenyl-3-methyl-6-methoxy-1,4-benzoquinol (DMQH2). The polypeptide is Ubiquinone/menaquinone biosynthesis C-methyltransferase UbiE (Rhizobium etli (strain CIAT 652)).